Consider the following 682-residue polypeptide: MKLFLNSNLLRNSIFFKISAFVLISVACFFLGKHWSEDGFRRLIFFSAEPSRSPIVALSPDFGKTYNISGLIYESHPILPPSLSPPPPPDSVELKVFGIVNENGTMSDEFQIGDYDVESAETLGNQTEFESSDDDDIKSTTARVSVRKFEICSENMTEYIPCLDNVEAIKRLNSTARGERFERNCPNDGMGLNCTVPIPQGYRSPIPWPRSRDEVWFNNVPHTKLVEDKGGQNWIYKENDKFKFPGGGTQFIHGADQYLDQISQMIPDISFGNHTRVVLDIGCGVASFGAYLMSRNVLTMSIAPKDVHENQIQFALERGVPAMVAAFTTRRLLYPSQAFDLVHCSRCRINWTRDDGILLLEVNRMLRAGGYFVWAAQPVYKHEKALEEQWEEMLNLTTRLCWVLVKKEGYIAIWQKPVNNTCYLSRGAGVSPPLCNSEDDPDNVWYVDLKACITRIEENGYGANLAPWPARLLTPPDRLQTIQIDSYIARKELFVAESKYWKEIISNYVNALHWKQIGLRNVLDMRAGFGGFAAALAELKVDCWVLNVIPVSGPNTLPVIYDRGLLGVMHDWCEPFDTYPRTYDLLHAAGLFSIERKRCNMTTMMLEMDRILRPGGRVYIRDTINVTSELQEIGNAMRWHTSLRETAEGPHSSYRVLLCEKRFESSEKRRTKKRRKTKGKRA.

At 1–11 (MKLFLNSNLLR) the chain is on the cytoplasmic side. The helical; Signal-anchor for type II membrane protein transmembrane segment at 12-32 (NSIFFKISAFVLISVACFFLG) threads the bilayer. Topologically, residues 33–682 (KHWSEDGFRR…KRRKTKGKRA (650 aa)) are lumenal. N-linked (GlcNAc...) asparagine glycosylation is found at N67, N103, N125, N155, N173, N193, N273, N350, N395, N419, N600, and N625.

The protein belongs to the methyltransferase superfamily.

The protein resides in the golgi apparatus membrane. This is Probable methyltransferase PMT12 from Arabidopsis thaliana (Mouse-ear cress).